We begin with the raw amino-acid sequence, 242 residues long: MRKKIIIGNWKMNKTKTEAENFVKEFNKITSELNLKLDKNLVAGLALPFTSLGIKKEGNFANLVIAAQNFHQNNSGAFTGEISAEMLLDLGVKMVVLGHSERREFFHETDEIVNMKMHQAIKNNLVPIVCVGETELQYNSNKSKEVIKNQIEKSLKNLSDFSKIIIAYEPIWAIGTGKTATVEYAQEMCKYIRSLTNEKTIIQYGGSVKPNNIKELLSQKDIDGALVGGASLNVKDFIDLIK.

9-11 (NWK) is a substrate binding site. The active-site Electrophile is histidine 99. Glutamate 169 serves as the catalytic Proton acceptor. Residues glycine 175, serine 207, and 228–229 (GG) contribute to the substrate site.

Belongs to the triosephosphate isomerase family. As to quaternary structure, homodimer.

It localises to the cytoplasm. The catalysed reaction is D-glyceraldehyde 3-phosphate = dihydroxyacetone phosphate. It participates in carbohydrate biosynthesis; gluconeogenesis. It functions in the pathway carbohydrate degradation; glycolysis; D-glyceraldehyde 3-phosphate from glycerone phosphate: step 1/1. Its function is as follows. Involved in the gluconeogenesis. Catalyzes stereospecifically the conversion of dihydroxyacetone phosphate (DHAP) to D-glyceraldehyde-3-phosphate (G3P). The sequence is that of Triosephosphate isomerase from Mycoplasma mobile (strain ATCC 43663 / 163K / NCTC 11711) (Mesomycoplasma mobile).